We begin with the raw amino-acid sequence, 405 residues long: Deoxyguanosinetriphosphate triphosphohydrolase-like protein (405 aa).

Residues 75-219 (RLTHTIEVAQ…AAIADDIAYN (145 aa)) form the HD domain.

Belongs to the dGTPase family. Type 2 subfamily.

The sequence is that of Deoxyguanosinetriphosphate triphosphohydrolase-like protein from Agrobacterium fabrum (strain C58 / ATCC 33970) (Agrobacterium tumefaciens (strain C58)).